We begin with the raw amino-acid sequence, 426 residues long: Histidine--tRNA ligase (426 aa).

Belongs to the class-II aminoacyl-tRNA synthetase family. As to quaternary structure, homodimer.

Its subcellular location is the cytoplasm. It carries out the reaction tRNA(His) + L-histidine + ATP = L-histidyl-tRNA(His) + AMP + diphosphate + H(+). This is Histidine--tRNA ligase from Prochlorococcus marinus (strain MIT 9301).